The sequence spans 652 residues: Potassium voltage-gated channel subfamily KQT member 1 (652 aa).

Topologically, residues 1 to 110 are cytoplasmic; that stretch reads MSSEQPAWTF…YNFLERPTGW (110 aa). The chain crosses the membrane as a helical span at residues 111–132; it reads KCFVYHFTVFLIVLICLIFSVL. Over 133-143 the chain is Extracellular; sequence STIQQYNNLAT. Residues 144–166 traverse the membrane as a helical segment; the sequence is ETLFWMEIVLVVFFGAEYVVRLW. At 167-182 the chain is on the cytoplasmic side; sequence SAGCRSKYVGVWGRLR. Residues 183-208 traverse the membrane as a helical segment; sequence FARKPISVIDLIVVVASVIVLCVGSN. Topologically, residues 209–216 are extracellular; the sequence is GQVFATSA. Residues 217 to 232 form a helical; Voltage-sensor membrane-spanning segment; that stretch reads IRGIRFLQILRMLHVD. An interaction with KCNE3 region spans residues 228-236; the sequence is MLHVDRQGG. Over 233 to 250 the chain is Cytoplasmic; that stretch reads RQGGTWRLLGSVVFIHRQ. Gln-234 contacts a 1,2-diacyl-sn-glycero-3-phospho-(1D-myo-inositol-4,5-bisphosphate). Residues 251-273 form a helical membrane-spanning segment; it reads ELITTLYIGFLGLIFSSYFVYLA. Residues 274 to 289 lie on the Extracellular side of the membrane; the sequence is EKDAIDSSGEYQFGSY. Residues 290-310 constitute an intramembrane region (pore-forming); sequence ADALWWGVVTVTTIGYGDKVP. The Extracellular segment spans residues 311–312; the sequence is QT. The helical transmembrane segment at 313 to 338 threads the bilayer; that stretch reads WIGKTIASCFSVFAISFFALPAGILG. At 339–652 the chain is on the cytoplasmic side; sequence SGFALKVQQK…VPRMTQDNIS (314 aa). Residues 360 to 372 form an interaction with CALM region; it reads AAASLIQTAWRCY. The interval 393–419 is disordered; it reads HHLMSPSPKPKKSAMVKKKKIRTERDE. A compositionally biased stretch (basic residues) spans 401-414; that stretch reads KPKKSAMVKKKKIR. The tract at residues 504 to 518 is interaction with CALM; calcium-dependent; sequence KVIRRMQYFVAKKKF. An interaction with KCNE1 C-terminus region spans residues 524–561; sequence PYDVRDVIEQYSQGHLNLMVRIKELQRRLDQSLGKPSL. An interaction with AKAP9 region spans residues 577–605; it reads IGSRLNRVEDKVTQMDHKLNLITDMLHHL. A C-terminal assembly domain (tetramerization) region spans residues 578–609; sequence GSRLNRVEDKVTQMDHKLNLITDMLHHLLTNQ. Residues 609 to 652 are disordered; sequence QQGSQSIRTPHRSNSLNSENHPSRNTLPTYEQLNVPRMTQDNIS.

The protein belongs to the potassium channel family. KQT (TC 1.A.1.15) subfamily. Kv7.1/KCNQ1 sub-subfamily. As to quaternary structure, tetramer. Heterotetramer with KCNE1; targets to the membrane raft. Interacts (via C-terminus) with CALM; forms a heterotetramer in a calcium-independent manner. Interacts with KCNE2; form a heterooligomer complex that targets to the membrane raft and leading to currents with an apparently instantaneous activation, a rapid deactivation process and a linear current-voltage relationship and decreases the amplitude of the outward current. Interacts with KCNE3; four KCNE3 molecules are bound to one KCNQ1 tetramer (4:4 KCNQ1:KCNE3 stoichiometry); alters membrane raft localization; affects KCNQ1 structure and gating properties. Interacts with KCNE4; impairs KCNQ1 localization in lipid rafts and inhibits voltage-gated potassium channel activity. Interacts with KCNE5; impairs KCNQ1 localization in lipid rafts and only conducts current upon strong and continued depolarization.

Its subcellular location is the cell membrane. It localises to the cytoplasmic vesicle membrane. The protein resides in the membrane raft. The protein localises to the endoplasmic reticulum. It is found in the basolateral cell membrane. The enzyme catalyses K(+)(in) = K(+)(out). Its activity is regulated as follows. PIP2 molecule is essential to activate KCNQ channels by inducing the coupling of the voltage-sensing domain (VSD) and the pore-forming domain (PD). Upon channel activation, PIP2 disrupts the VSD-calmodulin/CALM interactions, causing the release of CALM from the VSD which triggers the opening of the gate. Calcium potentiates KCNQ1 channel current through calcium-bound CALM. Calcium-bound CALM competes with PIP2 to stabilize the channel open state. Pore-forming subunit of the voltage-gated potassium (Kv) channel involved in the regulation of cardiomyocyte excitability and important in normal development and functions of myocardium, inner ear, stomach and colon. Associates with KCNE beta subunits that modulates current kinetics. Induces a voltage-dependent by rapidly activating and slowly deactivating potassium-selective outward current. Also promotes a delayed voltage activated potassium current showing outward rectification characteristic. During beta-adrenergic receptor stimulation participates in cardiac repolarization by associating with KCNE1 to form the I(Ks) cardiac potassium current that increases the amplitude and slows down the activation kinetics of outward potassium current I(Ks). When associated with KCNE3, forms the potassium channel that is important for cyclic AMP-stimulated intestinal secretion of chloride ions. When associated with KCNE2, forms a heterooligomer complex leading to currents with an apparently instantaneous activation, a rapid deactivation process and a linear current-voltage relationship and decreases the amplitude of the outward current. When associated with KCNE4, inhibits voltage-gated potassium channel activity. When associated with KCNE5, this complex only conducts current upon strong and continued depolarization. The polypeptide is Potassium voltage-gated channel subfamily KQT member 1 (Xenopus laevis (African clawed frog)).